Consider the following 220-residue polypeptide: Grancalcin (220 aa).

EF-hand domains are found at residues 51–86, 92–127, 122–157, and 158–193; these read SPADDSMWTYFTAVAGQDGEVDAEELQRCLTQSGIS, FSLETCRIMIAMLDRDYTGKMGFNEFKELWAALNAW, AALNAWKQNFMTIDQDQSGTVEHHELSQAIALMGYR, and LSPQTLAAIVRRYSKNGRIFFDDYVACCVKLRALTD. Aspartate 105, aspartate 107, threonine 109, lysine 111, glutamate 116, aspartate 135, aspartate 137, serine 139, threonine 141, and glutamate 146 together coordinate Ca(2+).

In terms of assembly, homodimer. Interacts with SRI and LCP1.

The protein localises to the cytoplasm. It is found in the cytoplasmic granule membrane. In terms of biological role, calcium-binding protein that may play a role in the adhesion of neutrophils to fibronectin. May play a role in the formation of focal adhesions. The polypeptide is Grancalcin (Gca) (Mus musculus (Mouse)).